A 79-amino-acid polypeptide reads, in one-letter code: Metallothionein-like protein type 2 (79 aa).

Belongs to the metallothionein superfamily. Type 15 family.

Its function is as follows. Metallothioneins have a high content of cysteine residues that bind various heavy metals. This Malus domestica (Apple) protein is Metallothionein-like protein type 2 (MT1).